A 195-amino-acid chain; its full sequence is Imidazoleglycerol-phosphate dehydratase (195 aa).

Belongs to the imidazoleglycerol-phosphate dehydratase family.

Its subcellular location is the cytoplasm. It catalyses the reaction D-erythro-1-(imidazol-4-yl)glycerol 3-phosphate = 3-(imidazol-4-yl)-2-oxopropyl phosphate + H2O. It participates in amino-acid biosynthesis; L-histidine biosynthesis; L-histidine from 5-phospho-alpha-D-ribose 1-diphosphate: step 6/9. The sequence is that of Imidazoleglycerol-phosphate dehydratase from Geobacter sp. (strain M21).